Here is a 578-residue protein sequence, read N- to C-terminus: Translation initiation factor eIF2B subunit gamma (578 aa).

Phosphoserine occurs at positions 296 and 300. Disordered regions lie at residues 298–337 (QASF…SATS) and 535–578 (DDSV…LFER). A Phosphothreonine modification is found at Thr306. The span at 544–578 (EIAEETDSDDRSDEDSDDSEYTDEYEYEDDGLFER) shows a compositional bias: acidic residues.

This sequence belongs to the eIF-2B gamma/epsilon subunits family. Component of the translation initiation factor 2B (eIF2B) complex which is a heterodecamer of two sets of five different subunits: alpha, beta, gamma, delta and epsilon. Subunits alpha, beta and delta comprise a regulatory subcomplex and subunits epsilon and gamma comprise a catalytic subcomplex. Within the complex, the hexameric regulatory complex resides at the center, with the two heterodimeric catalytic subcomplexes bound on opposite sides.

It localises to the cytoplasm. Its subcellular location is the cytosol. Its function is as follows. Acts as a component of the translation initiation factor 2B (eIF2B) complex, which catalyzes the exchange of GDP for GTP on the eukaryotic initiation factor 2 (eIF2) complex gamma subunit. Its guanine nucleotide exchange factor activity is repressed when bound to eIF2 complex phosphorylated on the alpha subunit, thereby limiting the amount of methionyl-initiator methionine tRNA available to the ribosome and consequently global translation is repressed. It activates the synthesis of GCN4 in yeast under amino acid starvation conditions by suppressing the inhibitory effects of multiple AUG codons present in the leader of GCN4 mRNA. It may promote either repression or activation of GCN4 expression depending on amino acid availability. GCD1 stabilizes the interaction between eIF2 and GCD6 and stimulates the catalytic activity in vitro. In Saccharomyces cerevisiae (strain ATCC 204508 / S288c) (Baker's yeast), this protein is Translation initiation factor eIF2B subunit gamma (GCD1).